The primary structure comprises 190 residues: MPRANEIKKGMVLNYNGKLLIVKDIDIQSPTARGAATLYKMRFSDVRTGLKVEERFKGDDIVDTVTLSRRGVDFSYIDGNEYVFMDKEDYTPYTFTKDQIEEELLFIPEGGMPDMQVLTWDGQLLALELPQTVDLEIVETAPGIKGASASARNKPATLSTGLVIQVPEYLSAGEKIRIHIEERRYMGRAD.

This sequence belongs to the elongation factor P family.

The chain is Elongation factor P-like protein from Citrobacter koseri (strain ATCC BAA-895 / CDC 4225-83 / SGSC4696).